Reading from the N-terminus, the 34-residue chain is Photosystem II reaction center protein M (34 aa).

The chain crosses the membrane as a helical span at residues 6 to 26; it reads LGAIATALFVFIPCVFLILLY.

Belongs to the PsbM family. As to quaternary structure, PSII is composed of 1 copy each of membrane proteins PsbA, PsbB, PsbC, PsbD, PsbE, PsbF, PsbH, PsbI, PsbJ, PsbK, PsbL, PsbM, PsbT, PsbX, PsbY, PsbZ, Psb30/Ycf12, peripheral proteins PsbO, CyanoQ (PsbQ), PsbU, PsbV and a large number of cofactors. It forms dimeric complexes.

Its subcellular location is the cellular thylakoid membrane. One of the components of the core complex of photosystem II (PSII). PSII is a light-driven water:plastoquinone oxidoreductase that uses light energy to abstract electrons from H(2)O, generating O(2) and a proton gradient subsequently used for ATP formation. It consists of a core antenna complex that captures photons, and an electron transfer chain that converts photonic excitation into a charge separation. This subunit is found at the monomer-monomer interface. The chain is Photosystem II reaction center protein M from Acaryochloris marina (strain MBIC 11017).